We begin with the raw amino-acid sequence, 155 residues long: Ribonuclease H (155 aa).

The RNase H type-1 domain occupies 7–150 (AQNAVDLYTD…ADKLACKGRD (144 aa)). Mg(2+) is bound by residues aspartate 16, glutamate 54, aspartate 77, and aspartate 142.

The protein belongs to the RNase H family. In terms of assembly, monomer. Requires Mg(2+) as cofactor.

It localises to the cytoplasm. The enzyme catalyses Endonucleolytic cleavage to 5'-phosphomonoester.. Endonuclease that specifically degrades the RNA of RNA-DNA hybrids. The protein is Ribonuclease H of Saccharopolyspora erythraea (strain ATCC 11635 / DSM 40517 / JCM 4748 / NBRC 13426 / NCIMB 8594 / NRRL 2338).